Reading from the N-terminus, the 245-residue chain is Neurovirulence factor ICP34.5 (245 aa).

The segment covering 1 to 15 (MARRRRRHRGPRRPR) has biased composition (basic residues). The required for nucleolar localization stretch occupies residues 1-17 (MARRRRRHRGPRRPRPP). 2 disordered regions span residues 1–122 (MARR…PFRL) and 143–172 (RRAG…PATP). Over residues 25-36 (TAQSQVTSTPNS) the composition is skewed to polar residues. Residues 67–77 (ASDDDDDDDWP) are compositionally biased toward acidic residues. 2 stretches are compositionally biased toward pro residues: residues 78–87 (DSPPPEPAPE) and 113–122 (SHPPSRPFRL). The Nuclear export signal signature appears at 122–131 (LPPRLALRLR). Repeat copies occupy residues 155–157 (ATP), 158–160 (ATP), 161–163 (ATP), 164–166 (ATP), 167–169 (ATP), and 170–172 (ATP). The tract at residues 155–172 (ATPATPATPATPATPATP) is 6 X 3 AA tandem repeats of A-T-P. Residues 158-172 (ATPATPATPATPATP) are compositionally biased toward low complexity. The interval 172-185 (PARVRFSPHVRVRH) is binding to PP1CA. The interval 172 to 185 (PARVRFSPHVRVRH) is interaction with host PPP1CA. Positions 187-245 (VVWASAARLARRGSWARERADRARFRRRVAEAEAVIGPCLGPEARARALARGAGPANSV) are important for interferon resistance. Positions 197-215 (RRGSWARERADRARFRRRV) match the Bipartite nuclear localization signal motif. The interaction with host EIF2S1/EIF-2ALPHA stretch occupies residues 215 to 230 (VAEAEAVIGPCLGPEA).

The protein belongs to the PPP1R15 family. Interacts with host PPP1CA to form a high-molecular-weight complex that dephosphorylates EIF2S1/eIF-2alpha. Interacts with host EIF2S1/eIF-2alpha; this interaction is crucial for the specific dephosphorylation of EIF2S1/eIF-2alpha by PPP1CA. Binds to proliferating cell nuclear antigen (PCNA), which may release host cells from growth arrest and facilitate viral replication. Interacts (via N-terminus) with host C1QBP and PRKCA. Interacts with protein UL31. Interacts with host TBK1. Interacts with host STING/TMEM173; this interaction inhibits the intracellular DNA sensing pathway. Interacts with host BECN1; this interaction modulates host autophagy.

Its subcellular location is the host cytoplasm. It localises to the host nucleus. It is found in the host nucleolus. The protein resides in the virion. Its function is as follows. Inhibits the establishment of the immune response and of the integrated stress response (ISR) in the infected cell. Plays essential roles in viral nuclear egress to mediate capsid transit across the nuclear membrane. Facilitates nuclear egress cooperatively with host C1QBP and protein kinase C/PKC to induce lamin A/C phosphorylation and subsequent reorganization. In turn, lamina disassembles and nuclear egress occurs. Recruits the serine/threonine protein phosphatase PPP1CA/PP1-alpha to dephosphorylate the translation initiation factor EIF2S1/eIF-2alpha, thereby couteracting the host shutoff of protein synthesis involving double-stranded RNA-dependent protein kinase EIF2AK2/PKR. In turn, controls host IRF3 activation and subsequently inhibits host interferon response. Controls the DNA sensing pathway by interacting with and inhibiting host STING/TMEM173. Also down-modulates the host MHC class II proteins cell surface expression. Acts as a neurovirulence factor that has a profound effect on the growth of the virus in central nervous system tissue, by interacting with host BECN1 and thereby antagonizing the host autophagy response. The chain is Neurovirulence factor ICP34.5 (RL1) from Homo sapiens (Human).